A 717-amino-acid chain; its full sequence is SUN domain-containing protein 2 (717 aa).

The segment at 1–66 (MSRRSQRLTR…PQLGPSSDAH (66 aa)) is disordered. The interval 1–139 (MSRRSQRLTR…SSSGYSSEDD (139 aa)) is LMNA-binding. The Nuclear portion of the chain corresponds to 1–212 (MSRRSQRLTR…LTRRFSSLKT (212 aa)). Phosphoserine is present on S12. Residues 19 to 32 (SSSSGGSSVAGSQS) show a composition bias toward low complexity. S38 and S54 each carry phosphoserine. T107 carries the post-translational modification Phosphothreonine. 4 positions are modified to phosphoserine: S110, S113, S116, and S136. A helical transmembrane segment spans residues 213–233 (FLWFLLPLLLLTCLTYGAWYF). Topologically, residues 234-717 (YPYGLQTFHP…RFRVHGEPAH (484 aa)) are perinuclear space. Coiled-coil stretches lie at residues 273–296 (EQRV…EFSS), 348–440 (RRET…EEVG), and 475–506 (LLQR…SARE). The segment at 507-717 (AAASLSLTLQ…RFRVHGEPAH (211 aa)) is sufficient for interaction with SYNE1 and SYNE2. Residues 555–716 (GASVISTRCS…YRFRVHGEPA (162 aa)) form the SUN domain. C601 and C705 are joined by a disulfide. N-linked (GlcNAc...) asparagine glycosylation occurs at N636.

In terms of assembly, core component of the LINC complex which is composed of inner nuclear membrane SUN domain-containing proteins coupled to outer nuclear membrane KASH domain-containing nesprins. SUN and KASH domain-containing proteins seem to bind each other promiscuously; however, differentially expression of LINC complex constituents is giving rise to specific assemblies. At least SUN1/2-containing core LINC complexes are proposed to be hexameric composed of three protomers of each KASH and SUN domain-containing protein. Interacts with SYNE2; the SUN2:SYNE2/KASH2 LINC complex is a heterohexamer; the homotrimeric cloverleave-like conformation of the SUN domain is a prerequisite for LINC complex formation in which three separate SYNE2/KASH2 peptides bind at the interface of adjacent SUN domains. Component of a probable SUN2:KASH5 LINC complex. Interacts with SYNE1 and SYNE3; probably forming respective LINC complexes. Interacts with A-type lamin. Interaction with lamins B1 and C is hardly detectable. Interacts with EMD and RAB5A. Interacts with TMEM43. Interacts with TMEM201. In terms of processing, the disulfide bond with SYNE2 is required for stability of the SUN2:SYNE2/KASH2 LINC complex under tensile forces though not required for the interaction. The disulfide bond is proposed to be conserved in LINC complexes involved in force transmission. In terms of tissue distribution, widely expressed. Highly expressed in heart, lung and muscle. Weakly expressed in fetal heart. Slightly overexpressed in some heart tissues form patients with congenital heart defects.

The protein resides in the nucleus inner membrane. Its subcellular location is the nucleus envelope. It is found in the endosome membrane. In terms of biological role, as a component of the LINC (LInker of Nucleoskeleton and Cytoskeleton) complex, involved in the connection between the nuclear lamina and the cytoskeleton. The nucleocytoplasmic interactions established by the LINC complex play an important role in the transmission of mechanical forces across the nuclear envelope and in nuclear movement and positioning. Specifically, SYNE2 and SUN2 assemble in arrays of transmembrane actin-associated nuclear (TAN) lines which are bound to F-actin cables and couple the nucleus to retrograde actin flow during actin-dependent nuclear movement. Required for interkinetic nuclear migration (INM) and essential for nucleokinesis and centrosome-nucleus coupling during radial neuronal migration in the cerebral cortex and during glial migration. Required for nuclear migration in retinal photoreceptor progenitors implicating association with cytoplasmic dynein-dynactin and kinesin motor complexes, and probably B-type lamins; SUN1 and SUN2 seem to act redundantly. The SUN1/2:KASH5 LINC complex couples telomeres to microtubules during meiosis; SUN1 and SUN2 seem to act at least partial redundantly. Anchors chromosome movement in the prophase of meiosis and is involved in selective gene expression of coding and non-coding RNAs needed for gametogenesis. Required for telomere attachment to nuclear envelope and gametogenesis. May also function on endocytic vesicles as a receptor for RAB5-GDP and participate in the activation of RAB5. This is SUN domain-containing protein 2 from Homo sapiens (Human).